A 186-amino-acid polypeptide reads, in one-letter code: Mating-type-like protein ALPHA2 (186 aa).

Positions 112 to 174 form a DNA-binding region, homeobox; TALE-type; sequence KKIKSRRLTK…NRRRKEKNTK (63 aa).

The protein belongs to the TALE/M-ATYP homeobox family. As to quaternary structure, forms a heterodimer with A1.

The protein resides in the nucleus. Mating type proteins are sequence specific DNA-binding proteins that act as master switches in yeast differentiation by controlling gene expression in a cell type-specific fashion. Transcriptional corepressor that acts in conjunction with A1 to repress transcription both of homozygote-specific genes and of genes necessary for the white-opaque switch, a prerequisite for mating. The chain is Mating-type-like protein ALPHA2 (MTLALPHA2) from Candida albicans (strain SC5314 / ATCC MYA-2876) (Yeast).